Reading from the N-terminus, the 224-residue chain is Peptidyl-prolyl cis-trans isomerase FKBP3 (224 aa).

Ala-2 is subject to N-acetylalanine. The residue at position 36 (Ser-36) is a Phosphoserine. The tract at residues 87 to 119 (NVKLNEDKPKETKSEETPDEGPPKYTKSVLKKG) is disordered. Over residues 89–102 (KLNEDKPKETKSEE) the composition is skewed to basic and acidic residues. An N6-acetyllysine modification is found at Lys-99. A PPIase FKBP-type domain is found at 128 to 224 (GDVVHCWYTG…IFEVELVDID (97 aa)). The residue at position 152 (Ser-152) is a Phosphoserine. Lys-170 carries the post-translational modification N6-acetyllysine.

It belongs to the FKBP-type PPIase family.

Its subcellular location is the nucleus. It carries out the reaction [protein]-peptidylproline (omega=180) = [protein]-peptidylproline (omega=0). With respect to regulation, inhibited preferentially by rapamycin over FK506. Its function is as follows. FK506- and rapamycin-binding proteins (FKBPs) constitute a family of receptors for the two immunosuppressants which inhibit T-cell proliferation by arresting two distinct cytoplasmic signal transmission pathways. PPIases accelerate the folding of proteins. The protein is Peptidyl-prolyl cis-trans isomerase FKBP3 (FKBP3) of Oryctolagus cuniculus (Rabbit).